The chain runs to 264 residues: MKQYLDLMKHILAEGVDKSDRTGTGTRSVFGYQMRFDLSKGFPLVSTKKCHMRSIIHELLWFLKGETNVAYLRENKVSIWDEWADENGDLGPVYGAQWRSWPTQSGDAIDQISQVIAQIKSQPDSRRLIVSAWNVGELDKMALAPCHAFFQFYVADGKLSCQLYQRSCDVFLGLPFNIASYALLTMMVAQQCDLALGDFVWTGGDTHLYSNHMEQTALQLSREPMPLPTMTILRRPESIFDYQFDDFELTNYAPHPHIKAPVAV.

Arg-21 is a binding site for dUMP. His-51 is a binding site for (6R)-5,10-methylene-5,6,7,8-tetrahydrofolate. 126–127 (RR) provides a ligand contact to dUMP. Cys-146 functions as the Nucleophile in the catalytic mechanism. DUMP is bound by residues 166 to 169 (RSCD), Asn-177, and 207 to 209 (HLY). Asp-169 contacts (6R)-5,10-methylene-5,6,7,8-tetrahydrofolate. Position 263 (Ala-263) interacts with (6R)-5,10-methylene-5,6,7,8-tetrahydrofolate.

Belongs to the thymidylate synthase family. Bacterial-type ThyA subfamily. In terms of assembly, homodimer.

It is found in the cytoplasm. It catalyses the reaction dUMP + (6R)-5,10-methylene-5,6,7,8-tetrahydrofolate = 7,8-dihydrofolate + dTMP. It functions in the pathway pyrimidine metabolism; dTTP biosynthesis. Functionally, catalyzes the reductive methylation of 2'-deoxyuridine-5'-monophosphate (dUMP) to 2'-deoxythymidine-5'-monophosphate (dTMP) while utilizing 5,10-methylenetetrahydrofolate (mTHF) as the methyl donor and reductant in the reaction, yielding dihydrofolate (DHF) as a by-product. This enzymatic reaction provides an intracellular de novo source of dTMP, an essential precursor for DNA biosynthesis. In Shewanella baltica (strain OS155 / ATCC BAA-1091), this protein is Thymidylate synthase.